The primary structure comprises 496 residues: Glycerol kinase (496 aa).

Thr11 provides a ligand contact to ADP. Residues Thr11, Thr12, and Ser13 each contribute to the ATP site. Thr11 provides a ligand contact to sn-glycerol 3-phosphate. Residue Arg15 participates in ADP binding. Arg81, Glu82, Tyr133, and Asp242 together coordinate sn-glycerol 3-phosphate. Residues Arg81, Glu82, Tyr133, Asp242, and Gln243 each coordinate glycerol. Thr264 and Gly307 together coordinate ADP. Thr264, Gly307, and Gln311 together coordinate ATP. Asn413 contributes to the ADP binding site.

Belongs to the FGGY kinase family.

The catalysed reaction is glycerol + ATP = sn-glycerol 3-phosphate + ADP + H(+). Its pathway is polyol metabolism; glycerol degradation via glycerol kinase pathway; sn-glycerol 3-phosphate from glycerol: step 1/1. With respect to regulation, inhibited by fructose 1,6-bisphosphate (FBP). Its function is as follows. Key enzyme in the regulation of glycerol uptake and metabolism. Catalyzes the phosphorylation of glycerol to yield sn-glycerol 3-phosphate. This Borrelia duttonii (strain Ly) protein is Glycerol kinase.